The sequence spans 154 residues: RxLR effector protein PexRD24 (154 aa).

A signal peptide spans 1–22 (MHSSLLWLGAVVALLAVNNVTA). A RxLR-dEER motif is present at residues 53 to 67 (RSLRAVETSEDEEER). A short sequence motif (PP1c-binding motif) is located at residue lysine 138.

This sequence belongs to the RxLR effector family. Interacts with the potato PP1c family proteins PP1c-1, PP1c-2 and PP1c-3.

It is found in the secreted. Its subcellular location is the host nucleus. The protein resides in the host nucleoplasm. It localises to the host nucleolus. Effector that interacts with isoforms of host protein phosphatase type 1c (PP1c), mimicking a regulatory subunit and causing their re-localization within the host nucleus. The holoenzymes formed with PP1c isoforms act to promote late blight by attenuating jasmonic acid (JA)- and salicylic acid (SA)-mediated transcriptional responses of the host plant. The chain is RxLR effector protein PexRD24 from Phytophthora infestans (strain T30-4) (Potato late blight agent).